The following is a 282-amino-acid chain: B3 domain-containing protein At5g25475 (282 aa).

Positions 20–114 (WKSLSPGQTW…NLEVQIFKNN (95 aa)) form a DNA-binding region, TF-B3. The segment at 127–178 (PETEPFHPTPKKPHKETTPASSFASGSGCSANGGTNGRGKQRSSDVKNPERY) is disordered. The span at 144-159 (TPASSFASGSGCSANG) shows a compositional bias: low complexity.

It is found in the nucleus. The chain is B3 domain-containing protein At5g25475 from Arabidopsis thaliana (Mouse-ear cress).